Reading from the N-terminus, the 72-residue chain is Translation initiation factor IF-1 (72 aa).

The region spanning 1-72 (MSKDDVIEMQ…SRGRITWRAK (72 aa)) is the S1-like domain.

It belongs to the IF-1 family. As to quaternary structure, component of the 30S ribosomal translation pre-initiation complex which assembles on the 30S ribosome in the order IF-2 and IF-3, IF-1 and N-formylmethionyl-tRNA(fMet); mRNA recruitment can occur at any time during PIC assembly.

The protein resides in the cytoplasm. Its function is as follows. One of the essential components for the initiation of protein synthesis. Stabilizes the binding of IF-2 and IF-3 on the 30S subunit to which N-formylmethionyl-tRNA(fMet) subsequently binds. Helps modulate mRNA selection, yielding the 30S pre-initiation complex (PIC). Upon addition of the 50S ribosomal subunit IF-1, IF-2 and IF-3 are released leaving the mature 70S translation initiation complex. This chain is Translation initiation factor IF-1, found in Clostridium novyi (strain NT).